The following is a 57-amino-acid chain: Large ribosomal subunit protein bL32 (57 aa).

The span at 1–19 (MATPKRRMSRANTRSRRSQ) shows a compositional bias: basic residues. The interval 1–21 (MATPKRRMSRANTRSRRSQWK) is disordered.

The protein belongs to the bacterial ribosomal protein bL32 family.

The polypeptide is Large ribosomal subunit protein bL32 (Mycobacterium ulcerans (strain Agy99)).